The primary structure comprises 314 residues: Glutathione synthetase (314 aa).

The ATP-grasp domain maps to 125–309; sequence KLFVMNFPQL…VAAKVWDTIE (185 aa). 151–207 is a binding site for ATP; the sequence is RDKHGAVVMKPLHGHGGAAVFRVMPQDMNFGSLFDMFTVTFKEPWVIQQFIPEVKHG. Residues glutamate 280 and asparagine 282 each coordinate Mg(2+).

The protein belongs to the prokaryotic GSH synthase family. The cofactor is Mg(2+). Requires Mn(2+) as cofactor.

The catalysed reaction is gamma-L-glutamyl-L-cysteine + glycine + ATP = glutathione + ADP + phosphate + H(+). Its pathway is sulfur metabolism; glutathione biosynthesis; glutathione from L-cysteine and L-glutamate: step 2/2. The sequence is that of Glutathione synthetase from Bradyrhizobium diazoefficiens (strain JCM 10833 / BCRC 13528 / IAM 13628 / NBRC 14792 / USDA 110).